A 155-amino-acid chain; its full sequence is Myosin light chain alkali (155 aa).

2 consecutive EF-hand domains span residues 7–41 (REIENVEFVFEVMGSAGEGIDAVDLGDALRALNLN) and 80–115 (GCYEDFIECLKLYDKEENGTMMLAELQHALLALGES).

In terms of assembly, myosin is a hexamer of 2 heavy chains and 4 light chains.

The sequence is that of Myosin light chain alkali (Mlc1) from Drosophila pseudoobscura pseudoobscura (Fruit fly).